The following is a 1600-amino-acid chain: Eukaryotic translation initiation factor 4 gamma 1 (1600 aa).

The disordered stretch occupies residues 1-88 (MNKAPQPTGP…ARPGPAPHVY (88 aa)). Residues 7-24 (PTGPPPARSPGLPQPAFP) are compositionally biased toward pro residues. Serine 15 carries the post-translational modification Phosphoserine. Polar residues predominate over residues 34 to 48 (STPQATQMNTPSQPR). The segment covering 60–79 (PSRAQPPSSAASRVQSAAPA) has biased composition (low complexity). An omega-N-methylarginine mark is found at arginine 80 and arginine 117. Disordered stretches follow at residues 173–230 (NQPP…NGES), 243–326 (SQGA…LSPE), 366–501 (ETHE…QLSQ), 507–526 (AATQ…KELN), and 541–606 (VDPA…DQWK). The segment at 179-207 (APKRERKTIRIRDPNQGGKDITEEIMSGA) is PABPC1-binding. Polar residues predominate over residues 208-220 (RTASTPTPPQTGG). Phosphothreonine is present on threonine 214. The residue at position 230 (serine 230) is a Phosphoserine. The segment covering 269 to 280 (SPSPTPSPPPIL) has biased composition (pro residues). Residue serine 324 is modified to Phosphoserine. Over residues 438-449 (KVSSAALASILS) the composition is skewed to low complexity. Over residues 463–479 (QEEEMEEDDDDEEGGEA) the composition is skewed to acidic residues. Polar residues predominate over residues 551-562 (QPPTGSNPSPES). Composition is skewed to basic and acidic residues over residues 578–587 (WDSKEDKIHN) and 596–606 (QKYEYKSDQWK). Lysine 606 carries the post-translational modification N6-acetyllysine. The EIF4E-binding stretch occupies residues 611-622 (EEKKRYDREFLL). Threonine 651 is modified (phosphothreonine). Disordered stretches follow at residues 667–719 (GPDF…TRKI) and 734–760 (AEKA…DGSK). Positions 686–1089 (GPPRGGPGGE…GSIDSNNQLF (404 aa)) are eIF3/EIF4A-binding. Residues arginine 689 and arginine 698 each carry the omega-N-methylarginine modification. The span at 697 to 707 (PRGPAGLGPRR) shows a compositional bias: low complexity. Positions 745–760 (TAADKDRGEEDADGSK) are enriched in basic and acidic residues. Residues 765–993 (FRRVRSILNK…QDVLDLRQSN (229 aa)) enclose the MIF4G domain. 2 disordered regions span residues 1029 to 1117 (AKGS…SEAT) and 1129 to 1238 (QQTL…AALS). Phosphoserine is present on serine 1032. 2 positions are modified to omega-N-methylarginine: arginine 1036 and arginine 1046. Phosphoserine occurs at positions 1081 and 1096. An N6-acetyllysine modification is found at lysine 1099. 2 positions are modified to phosphoserine: serine 1147 and serine 1149. Over residues 1148–1180 (LSRERGEKAGDRGDRLERSERGGDRGDRLDRAR) the composition is skewed to basic and acidic residues. Serine 1187 carries the phosphoserine; by PKC/PRKCA modification. The span at 1188-1225 (FSKEVEERSRERPSQPEGLRKAASLTEDRGRDPVKREA) shows a compositional bias: basic and acidic residues. A phosphoserine mark is found at serine 1189, serine 1196, and serine 1211. Threonine 1213 is modified (phosphothreonine). A phosphoserine mark is found at serine 1231 and serine 1238. An MI domain is found at 1241 to 1363 (EVEKKSKAII…PMGELFREIT (123 aa)). Residues 1429–1599 (ESEAPGQRTL…REAEDEESDH (171 aa)) form the W2 domain. The segment at 1450–1600 (LLKDGGSNQR…EAEDEESDHN (151 aa)) is EIF4A-binding. A necessary but not sufficient for MKNK1-binding region spans residues 1585-1600 (FFNWLREAEDEESDHN). A Phosphoserine modification is found at serine 1597.

Belongs to the eukaryotic initiation factor 4G family. As to quaternary structure, eIF4F is a multi-subunit complex, the composition of which varies with external and internal environmental conditions. It is composed of at least EIF4A, EIF4E (cap-binding) and EIF4G1/EIF4G3. Interacts with eIF3 complex, mutually exclusive with EIF4A1 or EIF4A2, EIF4E and through its N-terminus with PABPC1. Interacts with EIF4E or with EIF1 (mutually exclusive) through a common binding site. Interacts through its C-terminus with the serine/threonine kinases MKNK1, and with MKNK2. Appears to act as a scaffold protein, holding these enzymes in place to phosphorylate EIF4E. Non-phosphorylated EIF4EBP1 competes with EIF4G1/EIF4G3 to interact with EIF4E; insulin stimulated MAP-kinase (MAPK1 and MAPK3) phosphorylation of EIF4EBP1 causes dissociation of the complex allowing EIF4G1/EIF4G3 to bind and consequent initiation of translation. EIF4G1/EIF4G3 interacts with PABPC1 to bring about circularization of the mRNA. Interacts with EIF4E3. Interacts with CIRBP and MIF4GD. Interacts with RBM4. Interacts with HNRNPD/AUF1; the interaction requires RNA. Interacts with DDX3X; the interaction requires RNA. Interacts with DAZAP2. (Microbial infection) Interacts with murine norovirus viral genome-linked protein (via C-terminus); this interaction plays a role in translation of viral proteins. Post-translationally, phosphorylated at multiple sites in vivo. Phosphorylation at Ser-1187 by PRKCA induces binding to MKNK1.

The protein localises to the cytoplasm. It localises to the nucleus. It is found in the stress granule. Functionally, component of the protein complex eIF4F, which is involved in the recognition of the mRNA cap, ATP-dependent unwinding of 5'-terminal secondary structure and recruitment of mRNA to the ribosome. Exists in two complexes, either with EIF1 or with EIF4E (mutually exclusive). Together with EIF1, is required for leaky scanning, in particular for avoiding cap-proximal start codon. Together with EIF4E, antagonizes the scanning promoted by EIF1-EIF4G1 and locates the start codon (through a TISU element) without scanning. As a member of the eIF4F complex, required for endoplasmic reticulum stress-induced ATF4 mRNA translation. The protein is Eukaryotic translation initiation factor 4 gamma 1 (Eif4g1) of Mus musculus (Mouse).